Consider the following 515-residue polypeptide: MRLLFFFSILYTASLCCQLKDFLPCVMQLSAQKVDFNMNPIEVIFNITTEAKLMHTCRTYSRILPCFDQKMVQCGKPSEKTQLERGKRLHSYLCAPFSLQRQKIFLRRSKCIQDVLAEPQSSVCNRNDTVFADKLQSCREMCTRPDCVSKIELSEVSTCTYINIGKKCTAEAAQFFAQMQQVLTNKEYPMQCQYDLRKKPESELKKGLPIESLVAQTTSSTTYVTVHPPALPSVIDGVVTRTSLPIMRRTDPNSKFKPRPTTSQSNGPVIKTVIVDERGAPMNQPTSTQKPKVVHKFLPNPYTTKNPNTLKNDIIRTTRTIIPVVDKHTYVPWNYKVDAVQVSTLTSALAPVKPTETVISSPPVAFNFKLPAEQTSTQPFRVEINWHDDEVKQEPTKAPGVFVSPWYLKTPSHIPPEIEFATPTPLISSPLEAVSPILSQLKSNSLNFTELGNQANNYFSAALSAFAETKKEMAHNDPWRTIIDAVAPTIHKFSPDVIPRIREEINRIQPHQQKN.

The signal sequence occupies residues 1 to 16; that stretch reads MRLLFFFSILYTASLC. N-linked (GlcNAc...) asparagine glycosylation is found at Asn46 and Asn127. The segment at 248–267 is disordered; the sequence is RRTDPNSKFKPRPTTSQSNG. Asn447 carries N-linked (GlcNAc...) asparagine glycosylation.

As to expression, expressed in the terminal bulb of the pharynx and the posterior of the intestine (at protein level). Expressed by intestinal cells and secreted into the intestinal lumen (at protein level).

The protein resides in the secreted. Plays a role in promoting resistance to bacterial pathogens such as P.aeruginosa by inhibiting bacterial intestinal colonization. Its function is as follows. (Microbial infection) Promotes infection by microsporidian pathogens such as N.parisii in the early larval stages of development. Involved in ensuring the proper orientation and location of the spore proteins of N.parisii during intestinal cell invasion. The polypeptide is Protein aaim-1 (Caenorhabditis elegans).